A 173-amino-acid chain; its full sequence is C-type lectin mosGCTL-7 (173 aa).

Residues 1–24 (MVVGWSLLGWALSWLAVATVVVSA) form the signal peptide. One can recognise a C-type lectin domain in the interval 51–167 (NWFKATEYCH…CWDEYYFVCE (117 aa)). Disulfide bonds link cysteine 59-cysteine 166 and cysteine 139-cysteine 158. N-linked (GlcNAc...) asparagine glycosylation is found at asparagine 119 and asparagine 144.

Interacts with putative receptor-type tyrosine-protein phosphatase mosPTP-1; the interaction may mediate the recruitment of Japanese encephalitis virus particles in complex with C-type lectin mosGCTL-7 to the cell surface.

It is found in the secreted. In terms of biological role, carbohydrate-binding protein. (Microbial infection) Facilitates Japanese encephalitis virus infection in mosquitoes. This Culex quinquefasciatus (Southern house mosquito) protein is C-type lectin mosGCTL-7.